An 872-amino-acid chain; its full sequence is Alanine--tRNA ligase (872 aa).

Residues His-558, His-562, Cys-660, and His-664 each coordinate Zn(2+).

The protein belongs to the class-II aminoacyl-tRNA synthetase family. Zn(2+) serves as cofactor.

The protein resides in the cytoplasm. It catalyses the reaction tRNA(Ala) + L-alanine + ATP = L-alanyl-tRNA(Ala) + AMP + diphosphate. Its function is as follows. Catalyzes the attachment of alanine to tRNA(Ala) in a two-step reaction: alanine is first activated by ATP to form Ala-AMP and then transferred to the acceptor end of tRNA(Ala). Also edits incorrectly charged Ser-tRNA(Ala) and Gly-tRNA(Ala) via its editing domain. In Chlamydia pneumoniae (Chlamydophila pneumoniae), this protein is Alanine--tRNA ligase.